A 541-amino-acid chain; its full sequence is Amino-acid permease 2 (541 aa).

Polar residues predominate over residues 1-22 (MSFSPPNKSADATIQITEMTRQ). Residues 1–43 (MSFSPPNKSADATIQITEMTRQGTPSSGEAAASTPSTSSTESG) form a disordered region. A compositionally biased stretch (low complexity) spans 23–41 (GTPSSGEAAASTPSTSSTE). 12 consecutive transmembrane segments (helical) span residues 66-86 (FSFA…WIYG), 90-110 (GGAA…WALA), 139-159 (VPFL…AGGA), 188-208 (VVGV…LPTA), 214-234 (TSGY…TLLV), 255-275 (GWSP…WIMT), 301-321 (ATTF…VCMG), 347-367 (PAIF…IPGI), 399-419 (PLIA…LGLA), 424-444 (IGAV…IPII), 464-484 (VWVN…FFFP), and 496-516 (YAIV…YTHG).

This sequence belongs to the amino acid-polyamine-organocation (APC) superfamily.

It is found in the membrane. This Neurospora crassa (strain ATCC 24698 / 74-OR23-1A / CBS 708.71 / DSM 1257 / FGSC 987) protein is Amino-acid permease 2 (aap-2).